Consider the following 200-residue polypeptide: Large ribosomal subunit protein uL4 (200 aa).

Residues 38-75 (GRQGSKQQKNRSDVSGGGKRPWRQKGTGRARAGTSRGP) are disordered.

Belongs to the universal ribosomal protein uL4 family. Part of the 50S ribosomal subunit.

Functionally, one of the primary rRNA binding proteins, this protein initially binds near the 5'-end of the 23S rRNA. It is important during the early stages of 50S assembly. It makes multiple contacts with different domains of the 23S rRNA in the assembled 50S subunit and ribosome. Its function is as follows. Forms part of the polypeptide exit tunnel. The chain is Large ribosomal subunit protein uL4 from Azotobacter vinelandii (strain DJ / ATCC BAA-1303).